The primary structure comprises 78 residues: Small ribosomal subunit protein bS16 (78 aa).

The protein belongs to the bacterial ribosomal protein bS16 family.

This is Small ribosomal subunit protein bS16 from Maridesulfovibrio salexigens (strain ATCC 14822 / DSM 2638 / NCIMB 8403 / VKM B-1763) (Desulfovibrio salexigens).